The chain runs to 1191 residues: MSPIALNLLQSTPYQVGGSLAANHPSYSQREADRELLAQLRAGKFCYVFNCRQMGKSSLRVRAMHQLQQDGVVCVSIDITSLGTEADPQKWYNGIITQLYLGLPLAGKVALKPWLREREQLSPIQKLREFVETIILQTIGDRQIVIFIDEIDKVLSLPFSLDDFFSYIRFCYNQRADDHEYNRLSFALFGVATPSDLIDNKTQTPFNIGQAIALTGFTLTEALPLSAGLPVDEVSAREILGEILAWTGGQPFLTQKVCELVAEALQKGDLDCQSQTIATTIAQLIEEKIIRHWESNDEPVHFRTIGDRLLKDQARSGQLLGLYQEILHKGAIPADDSVEQTVLRLTGLVVKVKGQLRPYNPIYQAIFNAQWVSKELNKLRPYGTNLQAWINSNYQDSSRLLRGEALREALAWASSKNLSGVDYRYLNASQNQEQEASLAANQILTQANVKAKRMISFGIVVLMMSLGGSAIALSQAYFATLKQQRSQQGTELQRLGTSAQRQFTFDQIPGLVTALEAGNQLHHLVKADETLSQYPATSPLVSLQQILSQIAEKNVLTGHRDGVTSVAISSHKNLIASASRDGTVHLWTPQGEFLREFTGHTGSIYRVDFSPNGKIFATAGQDQTVKIWDLDGNLLQTLKGHQDSVYSVSFSPDGEILASTSRDRTVRLWHWRSGKTLAVLGGHTKSVDDAQFSPDGQTLVSVCRDGQIRLWDLDGNLIRQFGLPEVAFFGVNWHPNGNLLAVAADDGTVRLWTPQGEIKATLSGHDEFVTRVVFTPDGKQLFSSSSNGSVIHWSTSGKMLKKYQGYPEAIFGLALASNGALLAIGAENNLVKVWDMSPKSDLVNLNLPAVLGAVAENAKTNTIALAMENEPLILFNTKNRSRQFLSDASQNLDRLKFSADGQWLLGQRGRQWQLWQLQTKSQLLKTWRTDISRVYDVDLRTTPTSPQWAIAMATGSGEVQLWQGTKNNQTSGNQSQGVPIELNDPIVLALGNSIQRKEPIRSVSLHPTLPQLAAGDEQGNLTLWNFDGTLIRSIVAHGDRLNQLQYSPNGKYLLSAGREGTAKIWSVEGQLLHTLKSDPLPIDQIAISPDSQWIATAASDGMVRLWDQQGNLRGEFTSTSGSLLGLDFNRQGQWLLAVAQNGDLQSWPVTPEKERLRQLVEQGCDWLRDYLATEKQPAQTYSLEFCQPTGN.

WD repeat units follow at residues 558–588 (GHRDGVTSVAISSHKNLIASASRDGTVHLWT), 599–629 (GHTGSIYRVDFSPNGKIFATAGQDQTVKIWD), 640–670 (GHQDSVYSVSFSPDGEILASTSRDRTVRLWH), 682–712 (GHTKSVDDAQFSPDGQTLVSVCRDGQIRLWD), 723–753 (LPEVAFFGVNWHPNGNLLAVAADDGTVRLWT), 764–794 (GHDEFVTRVVFTPDGKQLFSSSSNGSVIHWS), 805–835 (GYPEAIFGLALASNGALLAIGAENNLVKVWD), 995–1025 (QRKEPIRSVSLHPTLPQLAAGDEQGNLTLWN), 1036–1066 (AHGDRLNQLQYSPNGKYLLSAGREGTAKIWS), 1077–1107 (SDPLPIDQIAISPDSQWIATAASDGMVRLWD), and 1118–1148 (STSGSLLGLDFNRQGQWLLAVAQNGDLQSWP).

This is an uncharacterized protein from Synechocystis sp. (strain ATCC 27184 / PCC 6803 / Kazusa).